The primary structure comprises 427 residues: MLDIKWIRENADVLDSALAKRGAGPLSASLIALDERRRTILQSLQDMQSRRNAASKEIGAAMAQKNSELADRLKAEVAELKTTLPAAEEESRRIEAELTDALSRIPNAPLDDVPVGADESANVVTRVVGAKPTWNHKPLEHFEIGEALGLMDFEGAARIAGSRFTILKGQLARLERALGQFMLDLHTGEHGYIEVQPPLLVRDDAMYGTGQLPKFTDDLFRTTDGRWLIPTAEVPLTNMVREQILDGEKLPLRFTALTPCFRSEAGSAGRDTRGMLRQHQFNKVELVSITDAESALDEHERMTACAEEVLKRLGLHYRVMTLCTGDMGFSARKTYDLEVWLPGQDAYREISSCSVCGDFQGRRMNARYRGKEEKGTKFAHTLNGSGVALGRALIAVIENYLNEDGSITVPDALIAYMGGLRRIEKAA.

Position 231 to 233 (231 to 233 (TAE)) interacts with L-serine. Position 262-264 (262-264 (RSE)) interacts with ATP. Position 285 (E285) interacts with L-serine. 349–352 (EISS) contacts ATP. L-serine is bound at residue S385.

This sequence belongs to the class-II aminoacyl-tRNA synthetase family. Type-1 seryl-tRNA synthetase subfamily. Homodimer. The tRNA molecule binds across the dimer.

The protein localises to the cytoplasm. It catalyses the reaction tRNA(Ser) + L-serine + ATP = L-seryl-tRNA(Ser) + AMP + diphosphate + H(+). The enzyme catalyses tRNA(Sec) + L-serine + ATP = L-seryl-tRNA(Sec) + AMP + diphosphate + H(+). Its pathway is aminoacyl-tRNA biosynthesis; selenocysteinyl-tRNA(Sec) biosynthesis; L-seryl-tRNA(Sec) from L-serine and tRNA(Sec): step 1/1. Functionally, catalyzes the attachment of serine to tRNA(Ser). Is also able to aminoacylate tRNA(Sec) with serine, to form the misacylated tRNA L-seryl-tRNA(Sec), which will be further converted into selenocysteinyl-tRNA(Sec). This is Serine--tRNA ligase from Sinorhizobium medicae (strain WSM419) (Ensifer medicae).